A 96-amino-acid chain; its full sequence is Putative pterin-4-alpha-carbinolamine dehydratase (96 aa).

This sequence belongs to the pterin-4-alpha-carbinolamine dehydratase family.

It catalyses the reaction (4aS,6R)-4a-hydroxy-L-erythro-5,6,7,8-tetrahydrobiopterin = (6R)-L-erythro-6,7-dihydrobiopterin + H2O. The sequence is that of Putative pterin-4-alpha-carbinolamine dehydratase from Brucella anthropi (strain ATCC 49188 / DSM 6882 / CCUG 24695 / JCM 21032 / LMG 3331 / NBRC 15819 / NCTC 12168 / Alc 37) (Ochrobactrum anthropi).